We begin with the raw amino-acid sequence, 916 residues long: Translation initiation factor IF-2 (916 aa).

The disordered stretch occupies residues 55 to 324 (EPKAVTPTSK…NHNANLKPVT (270 aa)). The span at 77–88 (AAEPKAAATKPA) shows a compositional bias: low complexity. 3 stretches are compositionally biased toward basic and acidic residues: residues 98–121 (FKAE…ERRN), 129–161 (RQKD…DNRN), and 198–212 (RQSE…EAKR). Positions 227-250 (KEQPTVEAAATAAPQAQPQTVEQV) are enriched in low complexity. A compositionally biased stretch (basic and acidic residues) spans 264-281 (ARPDKSRDFSHENEDGPK). Over residues 291–304 (KQNQVRNQKNSNWN) the composition is skewed to low complexity. Basic residues predominate over residues 305-314 (KKNKKSKNNR). The tr-type G domain occupies 418 to 585 (ERAPVVTIMG…TVLLVAEIQE (168 aa)). A G1 region spans residues 427-434 (GHVDHGKT). 427-434 (GHVDHGKT) lines the GTP pocket. The tract at residues 452–456 (GITQH) is G2. A G3 region spans residues 473 to 476 (DTPG). GTP contacts are provided by residues 473 to 477 (DTPGH) and 527 to 530 (NKID). Positions 527-530 (NKID) are G4. The tract at residues 563–565 (SAK) is G5.

It belongs to the TRAFAC class translation factor GTPase superfamily. Classic translation factor GTPase family. IF-2 subfamily.

The protein localises to the cytoplasm. Its function is as follows. One of the essential components for the initiation of protein synthesis. Protects formylmethionyl-tRNA from spontaneous hydrolysis and promotes its binding to the 30S ribosomal subunits. Also involved in the hydrolysis of GTP during the formation of the 70S ribosomal complex. The protein is Translation initiation factor IF-2 of Streptococcus mutans serotype c (strain ATCC 700610 / UA159).